A 250-amino-acid polypeptide reads, in one-letter code: MAVTKLVLVRHGESQWNKENRFTGWYDVDLSEKGVSEAKAAGKLLKEEGFSFDFAYTSVLKRAIHTLWNVLDELDQAWLPVEKSWKLNERHYGALQGLNKAETAEKYGDEQVKQWRRGFAVTPPELTKDDERYPGHDPRYAKLSEKELPLTESLALTIDRVIPYWTDTILPRMKSGERVIIAAHGNSLRALVKYLDNMSEDEILELNIPTGVPLVYEFDENFKPLKHYYLGNADEIAAKAAAVANQGKAK.

Substrate-binding positions include R10–N17, T23–G24, R62, E89–Y92, K100, R116–R117, and G185–N186. H11 functions as the Tele-phosphohistidine intermediate in the catalytic mechanism. The Proton donor/acceptor role is filled by E89.

It belongs to the phosphoglycerate mutase family. BPG-dependent PGAM subfamily. As to quaternary structure, homodimer.

The enzyme catalyses (2R)-2-phosphoglycerate = (2R)-3-phosphoglycerate. It participates in carbohydrate degradation; glycolysis; pyruvate from D-glyceraldehyde 3-phosphate: step 3/5. Its function is as follows. Catalyzes the interconversion of 2-phosphoglycerate and 3-phosphoglycerate. The chain is 2,3-bisphosphoglycerate-dependent phosphoglycerate mutase from Salmonella paratyphi A (strain ATCC 9150 / SARB42).